A 365-amino-acid polypeptide reads, in one-letter code: DNA replication and repair protein RecF (365 aa).

30–37 (GRNAQGKT) serves as a coordination point for ATP.

This sequence belongs to the RecF family.

The protein localises to the cytoplasm. In terms of biological role, the RecF protein is involved in DNA metabolism; it is required for DNA replication and normal SOS inducibility. RecF binds preferentially to single-stranded, linear DNA. It also seems to bind ATP. In Streptococcus pneumoniae (strain 70585), this protein is DNA replication and repair protein RecF.